Consider the following 354-residue polypeptide: Falstatin (354 aa).

The first 21 residues, methionine 1–cysteine 21, serve as a signal peptide directing secretion. The BC loop; binds and inhibits the active site cavity of cysteine proteases motif lies at leucine 226–tryptophan 236. The disordered stretch occupies residues lysine 274 to arginine 317. The segment covering tyrosine 275 to proline 302 has biased composition (basic and acidic residues).

Belongs to the protease inhibitor I71 family. In terms of assembly, oligomer; probably composed of 10 monomers. During the liver stage, proteolytically cleaved.

Its subcellular location is the secreted. The protein localises to the cytoplasmic vesicle. It localises to the secretory vesicle. The protein resides in the microneme. It is found in the host cytoplasm. Its subcellular location is the parasitophorous vacuole lumen. Cysteine protease inhibitor. Required for the invasion of host erythrocytes by merozoites. In the mosquito vector, essential for the gliding motility of hemocoel sporozoites and, therefore, for salivary gland invasion and the subsequent transmission from the mosquito to the mammalian host. Required for the invasion of host hepatocytes. During the liver stage, may prevent host hepatocyte cell death likely by inhibiting host cysteine proteases. The protein is Falstatin of Plasmodium berghei (strain Anka).